The primary structure comprises 580 residues: Tripeptidyl-peptidase sed5 (580 aa).

The tract at residues 1–21 (MYPLDGSARPHPPGTTRLNSV) is disordered. The Peptidase S53 domain maps to 181 to 567 (RAQRLIVAEL…RRTLEELRRI (387 aa)). An N-linked (GlcNAc...) asparagine glycan is attached at N236. Residues E269, D273, and S479 each act as charge relay system in the active site. 2 residues coordinate Ca(2+): D523 and I524. N-linked (GlcNAc...) asparagine glycosylation occurs at N529. Residues G543, G545, and D547 each contribute to the Ca(2+) site.

It depends on Ca(2+) as a cofactor.

It is found in the secreted. The protein localises to the extracellular space. It carries out the reaction Release of an N-terminal tripeptide from a polypeptide.. Functionally, secreted tripeptidyl-peptidase which degrades proteins at acidic pHs and is involved in virulence. The chain is Tripeptidyl-peptidase sed5 (sed5) from Aspergillus fumigatus (strain ATCC MYA-4609 / CBS 101355 / FGSC A1100 / Af293) (Neosartorya fumigata).